We begin with the raw amino-acid sequence, 785 residues long: Cadherin-7 (785 aa).

The first 27 residues, 1–27, serve as a signal peptide directing secretion; the sequence is MKLGKVEFCHLLQIIALFLCLSGMNQA. Positions 28-47 are excised as a propeptide; the sequence is EPSRSRSKPYFQSGRTRTKR. Topologically, residues 48–607 are extracellular; sequence SWVWNQFFVL…AYILPAGLST (560 aa). 5 consecutive Cadherin domains span residues 49–153, 154–262, 263–377, 378–482, and 482–599; these read WVWN…EPKF, LDGP…PPRF, PRRS…PPVF, TSRL…APEF, and FAME…AEAY. N-linked (GlcNAc...) asparagine glycosylation is found at Asn-449 and Asn-530. The helical transmembrane segment at 608-628 threads the bilayer; the sequence is GALIAILACVLTLLVLVLLIV. The Cytoplasmic portion of the chain corresponds to 629-785; that stretch reads TMRRRKKEPL…YGSGPDCLYS (157 aa).

It localises to the cell membrane. Functionally, cadherins are calcium-dependent cell adhesion proteins. They preferentially interact with themselves in a homophilic manner in connecting cells; cadherins may thus contribute to the sorting of heterogeneous cell types. In Gallus gallus (Chicken), this protein is Cadherin-7 (CDH7).